A 352-amino-acid polypeptide reads, in one-letter code: Holliday junction branch migration complex subunit RuvB (352 aa).

The segment at 1-42 (MAIVSSSAGRADSQPPAAKSRVVDASPLPEEASPAREDGLRP) is disordered. A large ATPase domain (RuvB-L) region spans residues 13-201 (SQPPAAKSRV…FGLIQRLEFY (189 aa)). A compositionally biased stretch (basic and acidic residues) spans 33–42 (SPAREDGLRP). ATP contacts are provided by L40, R41, G82, K85, T86, T87, R191, Y201, and R238. T86 lines the Mg(2+) pocket. Positions 202 to 273 (GLEDLQAIVE…LVDEALTLHR (72 aa)) are small ATPAse domain (RuvB-S). A head domain (RuvB-H) region spans residues 276 to 352 (ARGLDASDRR…RRHLGWPELP (77 aa)). DNA contacts are provided by R331 and R336.

The protein belongs to the RuvB family. In terms of assembly, homohexamer. Forms an RuvA(8)-RuvB(12)-Holliday junction (HJ) complex. HJ DNA is sandwiched between 2 RuvA tetramers; dsDNA enters through RuvA and exits via RuvB. An RuvB hexamer assembles on each DNA strand where it exits the tetramer. Each RuvB hexamer is contacted by two RuvA subunits (via domain III) on 2 adjacent RuvB subunits; this complex drives branch migration. In the full resolvosome a probable DNA-RuvA(4)-RuvB(12)-RuvC(2) complex forms which resolves the HJ.

It localises to the cytoplasm. The enzyme catalyses ATP + H2O = ADP + phosphate + H(+). Functionally, the RuvA-RuvB-RuvC complex processes Holliday junction (HJ) DNA during genetic recombination and DNA repair, while the RuvA-RuvB complex plays an important role in the rescue of blocked DNA replication forks via replication fork reversal (RFR). RuvA specifically binds to HJ cruciform DNA, conferring on it an open structure. The RuvB hexamer acts as an ATP-dependent pump, pulling dsDNA into and through the RuvAB complex. RuvB forms 2 homohexamers on either side of HJ DNA bound by 1 or 2 RuvA tetramers; 4 subunits per hexamer contact DNA at a time. Coordinated motions by a converter formed by DNA-disengaged RuvB subunits stimulates ATP hydrolysis and nucleotide exchange. Immobilization of the converter enables RuvB to convert the ATP-contained energy into a lever motion, pulling 2 nucleotides of DNA out of the RuvA tetramer per ATP hydrolyzed, thus driving DNA branch migration. The RuvB motors rotate together with the DNA substrate, which together with the progressing nucleotide cycle form the mechanistic basis for DNA recombination by continuous HJ branch migration. Branch migration allows RuvC to scan DNA until it finds its consensus sequence, where it cleaves and resolves cruciform DNA. The chain is Holliday junction branch migration complex subunit RuvB from Prochlorococcus marinus (strain MIT 9313).